The sequence spans 591 residues: Cytidine monophosphate-N-acetylneuraminic acid hydroxylase (591 aa).

Residues 16–114 (LASAEVESLK…IENDDENGVS (99 aa)) form the Rieske domain. [2Fe-2S] cluster contacts are provided by Cys56, His58, Cys77, and His80.

Belongs to the CMP-Neu5Ac hydroxylase family. [2Fe-2S] cluster is required as a cofactor.

It localises to the cytoplasm. It catalyses the reaction CMP-N-acetyl-beta-neuraminate + 2 Fe(II)-[cytochrome b5] + O2 + 2 H(+) = CMP-N-glycoloyl-beta-neuraminate + 2 Fe(III)-[cytochrome b5] + H2O. Its pathway is amino-sugar metabolism; N-acetylneuraminate metabolism. In terms of biological role, sialic acids are components of carbohydrate chains of glycoconjugates and are involved in cell-cell recognition and cell-pathogen interactions. Catalyzes the conversion of CMP-N-acetylneuraminic acid (CMP-Neu5Ac) into its hydroxylated derivative CMP-N-glycolylneuraminic acid (CMP-Neu5Gc), a sialic acid abundantly expressed at the surface of many cells. This chain is Cytidine monophosphate-N-acetylneuraminic acid hydroxylase (cmah), found in Xenopus laevis (African clawed frog).